The sequence spans 136 residues: Protein NrdI (136 aa).

The protein belongs to the NrdI family.

Functionally, probably involved in ribonucleotide reductase function. The protein is Protein NrdI of Shigella boydii serotype 4 (strain Sb227).